A 220-amino-acid chain; its full sequence is UPF0441 protein Spro_4274 (220 aa).

Residues 181–220 (MAPKPAVTNTVTRGGFGESVAKQTSMQRSSATSSSRSMGG) form a disordered region. Positions 203 to 220 (QTSMQRSSATSSSRSMGG) are enriched in low complexity.

The protein belongs to the UPF0441 family.

The chain is UPF0441 protein Spro_4274 from Serratia proteamaculans (strain 568).